The chain runs to 104 residues: Large ribosomal subunit protein uL24 (104 aa).

It belongs to the universal ribosomal protein uL24 family. As to quaternary structure, part of the 50S ribosomal subunit.

Its function is as follows. One of two assembly initiator proteins, it binds directly to the 5'-end of the 23S rRNA, where it nucleates assembly of the 50S subunit. One of the proteins that surrounds the polypeptide exit tunnel on the outside of the subunit. The polypeptide is Large ribosomal subunit protein uL24 (Anaplasma phagocytophilum (strain HZ)).